The chain runs to 93 residues: Putative defensin-like protein 283 (93 aa).

A signal peptide spans 1–24 (MTKIGFYLATYATIYIILSPGLLA). Disulfide bonds link cysteine 43-cysteine 83, cysteine 66-cysteine 90, and cysteine 72-cysteine 92.

Belongs to the DEFL family.

It localises to the secreted. This is Putative defensin-like protein 283 from Arabidopsis thaliana (Mouse-ear cress).